The following is a 184-amino-acid chain: Gremlin-1 (184 aa).

Positions 1 to 24 (MNRTAYTVGALLLLLGTLLPAAEG) are cleaved as a signal peptide. N-linked (GlcNAc...) asparagine glycosylation is found at Asn-2 and Asn-42. The tract at residues 24 to 78 (GKKKGSQGAIPPPDKAQHNDSEQTQSPPQPGSRTRGRGQGRGTAMPGEEVLESSQ) is disordered. 4 disulfide bridges follow: Cys-94–Cys-144, Cys-108–Cys-158, Cys-118–Cys-176, and Cys-122–Cys-178. Residues 94–184 (CKTQPLKQTI…QCRCISIDLD (91 aa)) enclose the CTCK domain.

It belongs to the DAN family. As to quaternary structure, homodimer; can also form homooligomers. Interacts with BMP2; can form higher oligomers with BMP2. Interacts with SLIT1 and SLIT2 in a glycosylation-dependent manner. Highly expressed in the brain, kidney, spleen, and testis and weakly expressed in the lung and liver. Predominantly expressed in differentiated cells as neurons in brain, type I cells in lung and globlet cells in intestine.

The protein resides in the secreted. Functionally, cytokine that may play an important role during carcinogenesis and metanephric kidney organogenesis, as a BMP antagonist required for early limb outgrowth and patterning in maintaining the FGF4-SHH feedback loop. Down-regulates the BMP4 signaling in a dose-dependent manner. Antagonist of BMP2; inhibits BMP2-mediated differentiation of osteoblasts (in vitro). Acts as inhibitor of monocyte chemotaxis. Can inhibit the growth or viability of normal cells but not transformed cells when is overexpressed. The chain is Gremlin-1 (Grem1) from Rattus norvegicus (Rat).